The chain runs to 440 residues: GTPase Der (440 aa).

EngA-type G domains lie at 3–167 and 176–351; these read PIIA…PYDR and TRIA…EQYC. GTP is bound by residues 9–16, 56–60, 119–122, 182–189, 229–233, and 294–297; these read GRPNVGKS, DTGGF, NKVD, DTAGI, and NKWD. The KH-like domain occupies 352–436; it reads KRVTTGELNR…PLKLIFRGRD (85 aa).

Belongs to the TRAFAC class TrmE-Era-EngA-EngB-Septin-like GTPase superfamily. EngA (Der) GTPase family. Associates with the 50S ribosomal subunit.

Functionally, GTPase that plays an essential role in the late steps of ribosome biogenesis. This chain is GTPase Der, found in Citrifermentans bemidjiense (strain ATCC BAA-1014 / DSM 16622 / JCM 12645 / Bem) (Geobacter bemidjiensis).